Here is a 425-residue protein sequence, read N- to C-terminus: Phosphoribosylamine--glycine ligase (425 aa).

The ATP-grasp domain occupies 110–317 (KEFMKRHGIP…LFDALLASVE (208 aa)). Residue 137–198 (ETCPTFPQVI…EAFLSGQEAS (62 aa)) participates in ATP binding. Residues Glu-287 and Asn-289 each contribute to the Mg(2+) site.

Belongs to the GARS family. Requires Mg(2+) as cofactor. Mn(2+) is required as a cofactor.

It carries out the reaction 5-phospho-beta-D-ribosylamine + glycine + ATP = N(1)-(5-phospho-beta-D-ribosyl)glycinamide + ADP + phosphate + H(+). It functions in the pathway purine metabolism; IMP biosynthesis via de novo pathway; N(1)-(5-phospho-D-ribosyl)glycinamide from 5-phospho-alpha-D-ribose 1-diphosphate: step 2/2. The protein is Phosphoribosylamine--glycine ligase of Chlorobaculum tepidum (strain ATCC 49652 / DSM 12025 / NBRC 103806 / TLS) (Chlorobium tepidum).